Consider the following 379-residue polypeptide: Chaperone protein DnaJ (379 aa).

The 66-residue stretch at 5–70 folds into the J domain; the sequence is DYYEILGLDK…QKKAQYDQFG (66 aa). A CR-type zinc finger spans residues 135–217; the sequence is GVEKEISVTR…CRGKGIVRKH (83 aa). Zn(2+)-binding residues include Cys-148, Cys-151, Cys-165, Cys-168, Cys-191, Cys-194, Cys-205, and Cys-208. 4 CXXCXGXG motif repeats span residues 148-155, 165-172, 191-198, and 205-212; these read CETCNGTG, CDKCNGTG, CDKCGGRG, and CEECRGKG.

Belongs to the DnaJ family. As to quaternary structure, homodimer. Requires Zn(2+) as cofactor.

The protein localises to the cytoplasm. Its function is as follows. Participates actively in the response to hyperosmotic and heat shock by preventing the aggregation of stress-denatured proteins and by disaggregating proteins, also in an autonomous, DnaK-independent fashion. Unfolded proteins bind initially to DnaJ; upon interaction with the DnaJ-bound protein, DnaK hydrolyzes its bound ATP, resulting in the formation of a stable complex. GrpE releases ADP from DnaK; ATP binding to DnaK triggers the release of the substrate protein, thus completing the reaction cycle. Several rounds of ATP-dependent interactions between DnaJ, DnaK and GrpE are required for fully efficient folding. Also involved, together with DnaK and GrpE, in the DNA replication of plasmids through activation of initiation proteins. This is Chaperone protein DnaJ from Clostridium kluyveri (strain ATCC 8527 / DSM 555 / NBRC 12016 / NCIMB 10680 / K1).